The following is a 231-amino-acid chain: Ribose-5-phosphate isomerase A (231 aa).

Substrate is bound by residues 32 to 35, 85 to 88, and 98 to 101; these read TGST, DGAD, and KGGG. Catalysis depends on Glu-107, which acts as the Proton acceptor. Substrate is bound at residue Lys-125.

The protein belongs to the ribose 5-phosphate isomerase family. Homodimer.

The enzyme catalyses aldehydo-D-ribose 5-phosphate = D-ribulose 5-phosphate. It participates in carbohydrate degradation; pentose phosphate pathway; D-ribose 5-phosphate from D-ribulose 5-phosphate (non-oxidative stage): step 1/1. In terms of biological role, catalyzes the reversible conversion of ribose-5-phosphate to ribulose 5-phosphate. In Paraburkholderia phymatum (strain DSM 17167 / CIP 108236 / LMG 21445 / STM815) (Burkholderia phymatum), this protein is Ribose-5-phosphate isomerase A.